The primary structure comprises 158 residues: MAGTIEALVPGGQATPGPPLGPELGPTPVDVQDVVAQINDETAAFDGMEVPVTVEYDDDGSFTIEVGVPPTAELIKDEAGFETGSGEPQVDFVADMSIEQVKKVAEQKSTDLLAYDVKNAAKEVGGTCASLGVTIEGEDARTFDDRVDAGDYDDVLDE.

A disordered region spans residues 1–28; the sequence is MAGTIEALVPGGQATPGPPLGPELGPTP.

This sequence belongs to the universal ribosomal protein uL11 family. Part of the ribosomal stalk of the 50S ribosomal subunit. Interacts with L10 and the large rRNA to form the base of the stalk. L10 forms an elongated spine to which L12 dimers bind in a sequential fashion forming a multimeric L10(L12)X complex.

Its function is as follows. Forms part of the ribosomal stalk which helps the ribosome interact with GTP-bound translation factors. The sequence is that of Large ribosomal subunit protein uL11 from Halorubrum lacusprofundi (strain ATCC 49239 / DSM 5036 / JCM 8891 / ACAM 34).